The chain runs to 923 residues: Neuropilin-1 (923 aa).

Positions 1-21 (MERGLPLLCAVLALVLAPAGA) are cleaved as a signal peptide. Over 22 to 856 (FRNDKCGDTI…PGNVLKTLDP (835 aa)) the chain is Extracellular. 3 cysteine pairs are disulfide-bonded: Cys-27–Cys-54, Cys-82–Cys-104, and Cys-147–Cys-173. CUB domains follow at residues 27-141 (CGDT…YEIF) and 147-265 (CSQN…YSVL). Asn-150 is a glycosylation site (N-linked (GlcNAc...) asparagine). Ca(2+)-binding residues include Glu-195, Asp-209, and Asp-250. Residues Cys-206 and Cys-228 are joined by a disulfide bond. N-linked (GlcNAc...) asparagine glycosylation is found at Asn-261, Asn-300, and Asn-522. Intrachain disulfides connect Cys-275-Cys-424 and Cys-431-Cys-583. 2 F5/8 type C domains span residues 275-424 (CMEA…VYGC) and 431-583 (CSGM…LLGC). Ser-612 is a glycosylation site (O-linked (Xyl...) (chondroitin sulfate) serine; alternate). A glycan (O-linked (Xyl...) (heparan sulfate) serine; alternate) is linked at Ser-612. The MAM domain occupies 645–811 (TYGFNCEFGW…NHISQEDCAK (167 aa)). The tract at residues 820–845 (PEIKIDETGSTPGYEGEGEGDKNISR) is disordered. Ser-829 carries O-linked (Xyl...) (chondroitin sulfate) serine glycosylation. N-linked (GlcNAc...) asparagine glycosylation is present at Asn-842. A helical transmembrane segment spans residues 857–879 (ILITIIAMSALGVLLGAVCGVVL). Residues 880–923 (YCACWHNGMSERNLSALENYNFELVDGVKLKKDKLNTQSTYSEA) lie on the Cytoplasmic side of the membrane. The residue at position 894 (Ser-894) is a Phosphoserine.

This sequence belongs to the neuropilin family. In terms of assembly, homodimer, and heterodimer with NRP2. Interacts with FER. Interacts with PLXNB1. Interacts with VEGFA. Interacts with ABCB8/MITOSUR in mitochondria. As to quaternary structure, (Microbial infection) Interacts with SARS coronavirus-2/SARS-CoV-2 spike protein S1 (via the CendR motif RRAR). In terms of tissue distribution, the expression of isoforms 1 and 2 does not seem to overlap. Expressed in olfactory epithelium (at protein level). Expressed in fibroblasts (at protein level). Expressed by the blood vessels of different tissues. In the developing embryo it is found predominantly in the nervous system. In adult tissues, it is highly expressed in heart and placenta; moderately in lung, liver, skeletal muscle, kidney and pancreas; and low in adult brain. Expressed in the central nervous system, including olfactory related regions such as the olfactory tubercles and paraolfactory gyri. The expression of isoforms 1 and 2 does not seem to overlap. Found in liver hepatocytes, kidney distal and proximal tubules.

The protein localises to the secreted. It is found in the mitochondrion membrane. Its subcellular location is the cell membrane. It localises to the cytoplasm. Functionally, cell-surface receptor involved in the development of the cardiovascular system, in angiogenesis, in the formation of certain neuronal circuits and in organogenesis outside the nervous system. Mediates the chemorepulsant activity of semaphorins. Recognizes a C-end rule (CendR) motif R/KXXR/K on its ligands which causes cellular internalization and vascular leakage. It binds to semaphorin 3A, the PLGF-2 isoform of PGF, the VEGF165 isoform of VEGFA and VEGFB. Coexpression with KDR results in increased VEGF165 binding to KDR as well as increased chemotaxis. Regulates VEGF-induced angiogenesis. Binding to VEGFA initiates a signaling pathway needed for motor neuron axon guidance and cell body migration, including for the caudal migration of facial motor neurons from rhombomere 4 to rhombomere 6 during embryonic development. Regulates mitochondrial iron transport via interaction with ABCB8/MITOSUR. In terms of biological role, (Microbial infection) Acts as a host factor for human coronavirus SARS-CoV-2 infection. Recognizes and binds to CendR motif RRAR on SARS-CoV-2 spike protein S1 which enhances SARS-CoV-2 infection. Its function is as follows. Binds VEGF-165 and may inhibit its binding to cells. May induce apoptosis by sequestering VEGF-165. May bind as well various members of the semaphorin family. Its expression has an averse effect on blood vessel number and integrity. The chain is Neuropilin-1 from Homo sapiens (Human).